A 1014-amino-acid polypeptide reads, in one-letter code: 2-oxoglutarate dehydrogenase, mitochondrial (1014 aa).

Residues 1-30 (MLRFVSSQTCRYSSRGLLKTSLLKNASTVK) constitute a mitochondrion transit peptide. Thiamine diphosphate contacts are provided by Arg-306, Asp-406, Asn-439, and Ile-441. The Mg(2+) site is built by Asp-406, Asn-439, and Ile-441.

It belongs to the alpha-ketoglutarate dehydrogenase family. Component of the 2-oxoglutarate dehydrogenase complex (OGDC), also called alpha-ketoglutarate dehydrogenase (KGDH) complex. The copmplex is composed of the catalytic subunits OGDH (2-oxoglutarate dehydrogenase KGD1; also called E1 subunit), DLST (dihydrolipoamide succinyltransferase KGD2; also called E2 subunit) and DLD (dihydrolipoamide dehydrogenase LPD1; also called E3 subunit), and the assembly factor KGD4. Thiamine diphosphate serves as cofactor. The cofactor is Mg(2+).

It localises to the mitochondrion. The protein resides in the mitochondrion matrix. Its subcellular location is the mitochondrion nucleoid. It catalyses the reaction N(6)-[(R)-lipoyl]-L-lysyl-[protein] + 2-oxoglutarate + H(+) = N(6)-[(R)-S(8)-succinyldihydrolipoyl]-L-lysyl-[protein] + CO2. Catabolite repressed. The 2-oxoglutarate dehydrogenase complex catalyzes the overall conversion of 2-oxoglutarate to succinyl-CoA and CO(2). It contains multiple copies of three enzymatic components: 2-oxoglutarate dehydrogenase (E1), dihydrolipoamide succinyltransferase (E2) and lipoamide dehydrogenase (E3). This is 2-oxoglutarate dehydrogenase, mitochondrial (KGD1) from Saccharomyces cerevisiae (strain ATCC 204508 / S288c) (Baker's yeast).